We begin with the raw amino-acid sequence, 436 residues long: Trigger factor (436 aa).

The PPIase FKBP-type domain maps to 163 to 248 (GDRVVLDFAG…VKEVAEGVLP (86 aa)).

Belongs to the FKBP-type PPIase family. Tig subfamily.

The protein resides in the cytoplasm. It catalyses the reaction [protein]-peptidylproline (omega=180) = [protein]-peptidylproline (omega=0). Involved in protein export. Acts as a chaperone by maintaining the newly synthesized protein in an open conformation. Functions as a peptidyl-prolyl cis-trans isomerase. The sequence is that of Trigger factor from Bordetella pertussis (strain Tohama I / ATCC BAA-589 / NCTC 13251).